We begin with the raw amino-acid sequence, 754 residues long: 84 kDa readthrough protein (754 aa).

Disordered stretches follow at residues 103–131 (RGEG…QGQT) and 713–740 (KNTR…KSGV). Polar residues predominate over residues 713 to 730 (KNTRMYPSTSGQSYNSYK).

The protein belongs to the virgaviridae capsid protein family.

It localises to the virion. In terms of biological role, minor capsid protein involved in virus transmission by the vector. The protein is 84 kDa readthrough protein (CP-CP2) of Soil-borne wheat mosaic virus (strain United States/Nebraska/1981) (SBWMV).